Here is a 125-residue protein sequence, read N- to C-terminus: Small ribosomal subunit protein uS13 (125 aa).

It belongs to the universal ribosomal protein uS13 family. In terms of assembly, part of the 30S ribosomal subunit. Forms a loose heterodimer with protein S19. Forms two bridges to the 50S subunit in the 70S ribosome.

In terms of biological role, located at the top of the head of the 30S subunit, it contacts several helices of the 16S rRNA. In the 70S ribosome it contacts the 23S rRNA (bridge B1a) and protein L5 of the 50S subunit (bridge B1b), connecting the 2 subunits; these bridges are implicated in subunit movement. Contacts the tRNAs in the A and P-sites. The polypeptide is Small ribosomal subunit protein uS13 (Orientia tsutsugamushi (strain Ikeda) (Rickettsia tsutsugamushi)).